Consider the following 115-residue polypeptide: Nucleoid-associated protein alr5067 (115 aa).

Belongs to the YbaB/EbfC family. In terms of assembly, homodimer.

Its subcellular location is the cytoplasm. It localises to the nucleoid. Its function is as follows. Binds to DNA and alters its conformation. May be involved in regulation of gene expression, nucleoid organization and DNA protection. The chain is Nucleoid-associated protein alr5067 from Nostoc sp. (strain PCC 7120 / SAG 25.82 / UTEX 2576).